We begin with the raw amino-acid sequence, 530 residues long: Autoinducer-2 kinase (530 aa).

It belongs to the FGGY kinase family.

It is found in the cytoplasm. The enzyme catalyses (S)-4,5-dihydroxypentane-2,3-dione + ATP = (2S)-2-hydroxy-3,4-dioxopentyl phosphate + ADP + H(+). In terms of biological role, catalyzes the phosphorylation of autoinducer-2 (AI-2) to phospho-AI-2, which subsequently inactivates the transcriptional regulator LsrR and leads to the transcription of the lsr operon. Phosphorylates the ring-open form of (S)-4,5-dihydroxypentane-2,3-dione (DPD), which is the precursor to all AI-2 signaling molecules, at the C5 position. The chain is Autoinducer-2 kinase from Yersinia pestis bv. Antiqua (strain Angola).